A 613-amino-acid polypeptide reads, in one-letter code: MAVSPTAKRKFHHPFRNLSRQSSSARTSAEAPPLPAVDQVLGGSADVSGGDQGGPGNTQPESPPAPLTRPPPPPPIFGSFSSSTCSFQSSISQEDAKPPYHPDTELKKVSRSLLRLQKYSLILGFVSINAGFIWALWNYHHYWYIFLPFLAANTFCQVIFAISNTIAATFTTLRRKLGFKKDVVPENPEKFVMVLPCYNEDRQEVETSLNSLINQQNIDEHPRLIMVIVDGNAKAPGEEVSTQDFLLNDMFAGGERIEFQNGYSARDGFFMPVTIQQGKYRGVPYIIIGKKHNQGKRDSLCFVRSFLWHYKNRSADISTMFNPDLFDYMGSILTDNGLDTIDYLCGMDGDTVFDDDCVYELIKALRRGGPDVVGVCGAVLVKFDEKPWGWWSVPSSQPPFFAWFTETNLRNRNLLQNTEYNLTQGLRREFQSRVSGKVNCLPGCCQLIRVQDATFGDAVLRERFGHVPKPNDTMTQQIMGVYSEDSIHASIIFSRHPKSQTRQALRARAYTTAPQSWSVYLSQRKRWALGSKSNEFVMVFRPGIIWVERLCSFITVTTWWLGPFVVAAMFGFAIALVRQGKKIFENHIMIGLMSVLAFRYAAKEKFKEKMPPV.

Residues 1–73 form a disordered region; sequence MAVSPTAKRK…PAPLTRPPPP (73 aa). Asn-17 carries N-linked (GlcNAc...) asparagine glycosylation. The segment covering 18–27 has biased composition (polar residues); that stretch reads LSRQSSSART. Over residues 61 to 73 the composition is skewed to pro residues; that stretch reads ESPPAPLTRPPPP. Transmembrane regions (helical) follow at residues 119–139 and 142–162; these read YSLILGFVSINAGFIWALWNY and YWYIFLPFLAANTFCQVIFAI. N-linked (GlcNAc...) asparagine glycans are attached at residues Asn-312, Asn-421, and Asn-471. The next 2 membrane-spanning stretches (helical) occupy residues 556-576 and 583-602; these read VTTWWLGPFVVAAMFGFAIAL and IFENHIMIGLMSVLAFRYAA.

This sequence belongs to the chitin synthase family.

It localises to the cell membrane. The catalysed reaction is [(1-&gt;4)-N-acetyl-beta-D-glucosaminyl](n) + UDP-N-acetyl-alpha-D-glucosamine = [(1-&gt;4)-N-acetyl-beta-D-glucosaminyl](n+1) + UDP + H(+). In terms of biological role, polymerizes chitin, a structural polymer of the cell wall and septum, by transferring the sugar moiety of UDP-GlcNAc to the non-reducing end of the growing chitin polymer. Plays a role in cell wall integrity. Plays a key role in pathogenicity. Likely contributes to post-penetration virulence. The chain is Chitin synthase 8 from Verticillium dahliae (strain VdLs.17 / ATCC MYA-4575 / FGSC 10137) (Verticillium wilt).